The following is a 178-amino-acid chain: Protein GrpE (178 aa).

Basic and acidic residues-rich tracts occupy residues 1–19 and 30–42; these read MAKH…KEEA and SPEK…ANER. The tract at residues 1 to 42 is disordered; that stretch reads MAKHKQEEHPEDVEVKEEAVETAEQAESASPEKSELELANER.

The protein belongs to the GrpE family. In terms of assembly, homodimer.

The protein localises to the cytoplasm. In terms of biological role, participates actively in the response to hyperosmotic and heat shock by preventing the aggregation of stress-denatured proteins, in association with DnaK and GrpE. It is the nucleotide exchange factor for DnaK and may function as a thermosensor. Unfolded proteins bind initially to DnaJ; upon interaction with the DnaJ-bound protein, DnaK hydrolyzes its bound ATP, resulting in the formation of a stable complex. GrpE releases ADP from DnaK; ATP binding to DnaK triggers the release of the substrate protein, thus completing the reaction cycle. Several rounds of ATP-dependent interactions between DnaJ, DnaK and GrpE are required for fully efficient folding. In Streptococcus sanguinis (strain SK36), this protein is Protein GrpE.